The chain runs to 203 residues: CASP-like protein 2U2 (203 aa).

The disordered stretch occupies residues 1-21 (MGGFVDDGAAGLAPSHGSSRA). The Cytoplasmic segment spans residues 1 to 27 (MGGFVDDGAAGLAPSHGSSRAGRGLEG). Residues 28 to 48 (AGVFLRFVASLLSIAGLMLLV) form a helical membrane-spanning segment. Residues 49–73 (KDNQTVQQMVATEAVTLETKYSDIS) are Extracellular-facing. N-linked (GlcNAc...) asparagine glycosylation occurs at Asn-51. A helical transmembrane segment spans residues 74-94 (AFVFLLYTNGLVAVYCFFLAL). Residues 95 to 108 (ASVFSLIASARSGK) lie on the Cytoplasmic side of the membrane. A helical transmembrane segment spans residues 109-129 (LAGWVTFVLDQGLAYVLLAAA). At 130 to 163 (AASTEVLYLAENGDLKTSWAEICSQFGHFCHMAR) the chain is on the extracellular side. The chain crosses the membrane as a helical span at residues 164-184 (ASIVVSFLSMLAMAVLSVMSA). At 185–203 (QQLFSKYRRPMTAKTAQDI) the chain is on the cytoplasmic side.

The protein belongs to the Casparian strip membrane proteins (CASP) family. In terms of assembly, homodimer and heterodimers.

Its subcellular location is the cell membrane. The protein is CASP-like protein 2U2 of Osmunda lancea (Fern).